Consider the following 381-residue polypeptide: Alcohol dehydrogenase-like 6 (381 aa).

Positions 53, 55, 72, 102, 105, 108, 116, and 179 each coordinate Zn(2+). Residues S55 and H72 each coordinate an alcohol. An NAD(+)-binding site is contributed by S55. NAD(+) contacts are provided by residues 204–209, D228, K233, 297–299, F324, and R374; these read GLGTVG and LGV.

Belongs to the zinc-containing alcohol dehydrogenase family. Class-III subfamily. Homodimer. Zn(2+) is required as a cofactor.

Its subcellular location is the cytoplasm. The catalysed reaction is a primary alcohol + NAD(+) = an aldehyde + NADH + H(+). The enzyme catalyses a secondary alcohol + NAD(+) = a ketone + NADH + H(+). The chain is Alcohol dehydrogenase-like 6 from Arabidopsis thaliana (Mouse-ear cress).